Reading from the N-terminus, the 529-residue chain is Lanosterol 14-alpha demethylase (529 aa).

Position 468 (Cys468) interacts with heme.

The protein belongs to the cytochrome P450 family. Requires heme as cofactor.

The protein resides in the membrane. The catalysed reaction is a 14alpha-methyl steroid + 3 reduced [NADPH--hemoprotein reductase] + 3 O2 = a Delta(14) steroid + formate + 3 oxidized [NADPH--hemoprotein reductase] + 4 H2O + 4 H(+). It carries out the reaction a 14alpha-methyl steroid + reduced [NADPH--hemoprotein reductase] + O2 = a 14alpha-hydroxymethyl steroid + oxidized [NADPH--hemoprotein reductase] + H2O + H(+). It catalyses the reaction a 14alpha-hydroxymethyl steroid + reduced [NADPH--hemoprotein reductase] + O2 = a 14alpha-formyl steroid + oxidized [NADPH--hemoprotein reductase] + 2 H2O + H(+). The enzyme catalyses a 14alpha-formyl steroid + reduced [NADPH--hemoprotein reductase] + O2 = a Delta(14) steroid + formate + oxidized [NADPH--hemoprotein reductase] + H2O + 2 H(+). The catalysed reaction is lanosterol + 3 reduced [NADPH--hemoprotein reductase] + 3 O2 = 4,4-dimethyl-5alpha-cholesta-8,14,24-trien-3beta-ol + formate + 3 oxidized [NADPH--hemoprotein reductase] + 4 H2O + 4 H(+). It carries out the reaction lanosterol + reduced [NADPH--hemoprotein reductase] + O2 = 32-hydroxylanosterol + oxidized [NADPH--hemoprotein reductase] + H2O + H(+). It catalyses the reaction 32-hydroxylanosterol + reduced [NADPH--hemoprotein reductase] + O2 = 32-oxolanosterol + oxidized [NADPH--hemoprotein reductase] + 2 H2O + H(+). The enzyme catalyses 32-oxolanosterol + reduced [NADPH--hemoprotein reductase] + O2 = 4,4-dimethyl-5alpha-cholesta-8,14,24-trien-3beta-ol + formate + oxidized [NADPH--hemoprotein reductase] + H2O + 2 H(+). The catalysed reaction is eburicol + 3 reduced [NADPH--hemoprotein reductase] + 3 O2 = 14-demethyleburicol + formate + 3 oxidized [NADPH--hemoprotein reductase] + 4 H2O + 4 H(+). It carries out the reaction eburicol + reduced [NADPH--hemoprotein reductase] + O2 = 32-hydroxyeburicol + oxidized [NADPH--hemoprotein reductase] + H2O + H(+). It catalyses the reaction 32-hydroxyeburicol + reduced [NADPH--hemoprotein reductase] + O2 = 32-oxoeburicol + oxidized [NADPH--hemoprotein reductase] + 2 H2O + H(+). The enzyme catalyses 32-oxoeburicol + reduced [NADPH--hemoprotein reductase] + O2 = 14-demethyleburicol + formate + oxidized [NADPH--hemoprotein reductase] + H2O + 2 H(+). The protein operates within steroid biosynthesis; zymosterol biosynthesis; zymosterol from lanosterol: step 1/6. Its function is as follows. Sterol 14alpha-demethylase that plays a critical role in the third module of ergosterol biosynthesis pathway, being ergosterol the major sterol component in fungal membranes that participates in a variety of functions. The third module or late pathway involves the ergosterol synthesis itself through consecutive reactions that mainly occur in the endoplasmic reticulum (ER) membrane. In filamentous fungi, during the initial step of this module, lanosterol (lanosta-8,24-dien-3beta-ol) can be metabolized to eburicol. Sterol 14alpha-demethylase catalyzes the three-step oxidative removal of the 14alpha-methyl group (C-32) of both these sterols in the form of formate, and converts eburicol and lanosterol to 14-demethyleburicol (4,4,24-trimethylergosta-8,14,24(28)-trienol) and 4,4-dimethyl-5alpha-cholesta-8,14,24-trien-3beta-ol, respectively, which are further metabolized by other enzymes in the pathway to ergosterol. Can also use substrates not intrinsic to fungi, such as 24,25-dihydrolanosterol (DHL), producing 4,4-dimethyl-8,14-cholestadien-3-beta-ol, but at lower rates than the endogenous substrates. The sequence is that of Lanosterol 14-alpha demethylase (ERG11) from Eremothecium gossypii (strain ATCC 10895 / CBS 109.51 / FGSC 9923 / NRRL Y-1056) (Yeast).